The following is a 144-amino-acid chain: Large ribosomal subunit protein uL16 (144 aa).

Belongs to the universal ribosomal protein uL16 family. As to quaternary structure, part of the 50S ribosomal subunit.

Binds 23S rRNA and is also seen to make contacts with the A and possibly P site tRNAs. This Clostridium perfringens (strain ATCC 13124 / DSM 756 / JCM 1290 / NCIMB 6125 / NCTC 8237 / Type A) protein is Large ribosomal subunit protein uL16.